The following is a 297-amino-acid chain: Ribonuclease HIII (297 aa).

Residues 81–297 (IPIIGTDEVG…NTKKAQALLK (217 aa)) form the RNase H type-2 domain. The a divalent metal cation site is built by Asp-87, Glu-88, and Asp-192.

The protein belongs to the RNase HII family. RnhC subfamily. It depends on Mn(2+) as a cofactor. Mg(2+) serves as cofactor.

It localises to the cytoplasm. The catalysed reaction is Endonucleolytic cleavage to 5'-phosphomonoester.. Endonuclease that specifically degrades the RNA of RNA-DNA hybrids. In Streptococcus agalactiae serotype Ia (strain ATCC 27591 / A909 / CDC SS700), this protein is Ribonuclease HIII.